Reading from the N-terminus, the 144-residue chain is Small ribosomal subunit protein eS19A (144 aa).

A disordered region spans residues 83-102 (VNRGMRPSHHRDGSGSVQRK).

The protein belongs to the eukaryotic ribosomal protein eS19 family. As to quaternary structure, component of the small ribosomal subunit (SSU). Mature yeast ribosomes consist of a small (40S) and a large (60S) subunit. The 40S small subunit contains 1 molecule of ribosomal RNA (18S rRNA) and at least 33 different proteins. The large 60S subunit contains 3 rRNA molecules (25S, 5.8S and 5S rRNA) and at least 46 different proteins.

The protein resides in the cytoplasm. It localises to the nucleus. The protein localises to the nucleolus. In terms of biological role, component of the ribosome, a large ribonucleoprotein complex responsible for the synthesis of proteins in the cell. The small ribosomal subunit (SSU) binds messenger RNAs (mRNAs) and translates the encoded message by selecting cognate aminoacyl-transfer RNA (tRNA) molecules. The large subunit (LSU) contains the ribosomal catalytic site termed the peptidyl transferase center (PTC), which catalyzes the formation of peptide bonds, thereby polymerizing the amino acids delivered by tRNAs into a polypeptide chain. The nascent polypeptides leave the ribosome through a tunnel in the LSU and interact with protein factors that function in enzymatic processing, targeting, and the membrane insertion of nascent chains at the exit of the ribosomal tunnel. eS19 is required for proper maturation of the small (40S) ribosomal subunit. Binds to 40S pre-ribosomal particles, probably required after association of NOC4 but before association of ENP1, TSR1 and RIO2 with 20/21S pre-rRNA. This is Small ribosomal subunit protein eS19A (rps1901) from Schizosaccharomyces pombe (strain 972 / ATCC 24843) (Fission yeast).